The sequence spans 194 residues: Fe/S biogenesis protein NfuA (194 aa).

The [4Fe-4S] cluster site is built by cysteine 152 and cysteine 155.

This sequence belongs to the NfuA family. As to quaternary structure, homodimer. It depends on [4Fe-4S] cluster as a cofactor.

Functionally, involved in iron-sulfur cluster biogenesis. Binds a 4Fe-4S cluster, can transfer this cluster to apoproteins, and thereby intervenes in the maturation of Fe/S proteins. Could also act as a scaffold/chaperone for damaged Fe/S proteins. This is Fe/S biogenesis protein NfuA from Pseudomonas fluorescens (strain SBW25).